Reading from the N-terminus, the 174-residue chain is Crossover junction endodeoxyribonuclease RuvC (174 aa).

Active-site residues include Asp-8, Glu-67, and Asp-139. Asp-8, Glu-67, and Asp-139 together coordinate Mg(2+).

The protein belongs to the RuvC family. Homodimer which binds Holliday junction (HJ) DNA. The HJ becomes 2-fold symmetrical on binding to RuvC with unstacked arms; it has a different conformation from HJ DNA in complex with RuvA. In the full resolvosome a probable DNA-RuvA(4)-RuvB(12)-RuvC(2) complex forms which resolves the HJ. It depends on Mg(2+) as a cofactor.

Its subcellular location is the cytoplasm. It catalyses the reaction Endonucleolytic cleavage at a junction such as a reciprocal single-stranded crossover between two homologous DNA duplexes (Holliday junction).. In terms of biological role, the RuvA-RuvB-RuvC complex processes Holliday junction (HJ) DNA during genetic recombination and DNA repair. Endonuclease that resolves HJ intermediates. Cleaves cruciform DNA by making single-stranded nicks across the HJ at symmetrical positions within the homologous arms, yielding a 5'-phosphate and a 3'-hydroxyl group; requires a central core of homology in the junction. The consensus cleavage sequence is 5'-(A/T)TT(C/G)-3'. Cleavage occurs on the 3'-side of the TT dinucleotide at the point of strand exchange. HJ branch migration catalyzed by RuvA-RuvB allows RuvC to scan DNA until it finds its consensus sequence, where it cleaves and resolves the cruciform DNA. The sequence is that of Crossover junction endodeoxyribonuclease RuvC from Stutzerimonas stutzeri (strain A1501) (Pseudomonas stutzeri).